The primary structure comprises 425 residues: Phosphomethylpyrimidine synthase (425 aa).

Substrate is bound by residues Met94, Tyr123, His162, Ser184 to Gly186, Asn225 to Arg228, and Glu264. His268 serves as a coordination point for Zn(2+). Tyr291 is a binding site for substrate. Zn(2+) is bound at residue His332. Cys407, Cys410, and Cys414 together coordinate [4Fe-4S] cluster.

This sequence belongs to the ThiC family. [4Fe-4S] cluster is required as a cofactor.

It catalyses the reaction 5-amino-1-(5-phospho-beta-D-ribosyl)imidazole + S-adenosyl-L-methionine = 4-amino-2-methyl-5-(phosphooxymethyl)pyrimidine + CO + 5'-deoxyadenosine + formate + L-methionine + 3 H(+). It participates in cofactor biosynthesis; thiamine diphosphate biosynthesis. Its function is as follows. Catalyzes the synthesis of the hydroxymethylpyrimidine phosphate (HMP-P) moiety of thiamine from aminoimidazole ribotide (AIR) in a radical S-adenosyl-L-methionine (SAM)-dependent reaction. This Methanocorpusculum labreanum (strain ATCC 43576 / DSM 4855 / Z) protein is Phosphomethylpyrimidine synthase.